The primary structure comprises 379 residues: Galactose-1-phosphate uridylyltransferase (379 aa).

The segment covering 1 to 15 (MSQSGADPEQRQQAS) has biased composition (polar residues). The interval 1–20 (MSQSGADPEQRQQASEADAM) is disordered. C75 is a binding site for Zn(2+). UDP-alpha-D-glucose is bound by residues A81, 97 to 98 (ND), and N173. A Zn(2+)-binding site is contributed by H184. H186 (tele-UMP-histidine intermediate) is an active-site residue. Q188 lines the UDP-alpha-D-glucose pocket. The Zn(2+) site is built by E202, H301, H319, and H321. UDP-alpha-D-glucose-binding positions include 334–337 (KFMV) and 339–340 (YE).

The protein belongs to the galactose-1-phosphate uridylyltransferase type 1 family. As to quaternary structure, homodimer. Zn(2+) serves as cofactor.

The catalysed reaction is alpha-D-galactose 1-phosphate + UDP-alpha-D-glucose = alpha-D-glucose 1-phosphate + UDP-alpha-D-galactose. Its pathway is carbohydrate metabolism; galactose metabolism. Plays an important role in galactose metabolism. This is Galactose-1-phosphate uridylyltransferase (Galt) from Rattus norvegicus (Rat).